The sequence spans 124 residues: Small ribosomal subunit protein uS12 (124 aa).

Position 89 is a 3-methylthioaspartic acid (D89).

This sequence belongs to the universal ribosomal protein uS12 family. Part of the 30S ribosomal subunit. Contacts proteins S8 and S17. May interact with IF1 in the 30S initiation complex.

In terms of biological role, with S4 and S5 plays an important role in translational accuracy. Interacts with and stabilizes bases of the 16S rRNA that are involved in tRNA selection in the A site and with the mRNA backbone. Located at the interface of the 30S and 50S subunits, it traverses the body of the 30S subunit contacting proteins on the other side and probably holding the rRNA structure together. The combined cluster of proteins S8, S12 and S17 appears to hold together the shoulder and platform of the 30S subunit. In Glaesserella parasuis serovar 5 (strain SH0165) (Haemophilus parasuis), this protein is Small ribosomal subunit protein uS12.